The following is a 391-amino-acid chain: Processive diacylglycerol beta-glucosyltransferase (391 aa).

It belongs to the glycosyltransferase 28 family. UgtP subfamily.

The protein localises to the cell membrane. The catalysed reaction is a 1,2-diacyl-3-O-(beta-D-glucopyranosyl)-sn-glycerol + UDP-alpha-D-glucose = a 1,2-diacyl-3-O-(beta-D-Glc-(1-&gt;6)-beta-D-Glc)-sn-glycerol + UDP + H(+). It carries out the reaction a 1,2-diacyl-sn-glycerol + UDP-alpha-D-glucose = a 1,2-diacyl-3-O-(beta-D-glucopyranosyl)-sn-glycerol + UDP + H(+). It participates in glycolipid metabolism; diglucosyl-diacylglycerol biosynthesis. Functionally, processive glucosyltransferase involved in the biosynthesis of both the bilayer- and non-bilayer-forming membrane glucolipids. Is able to successively transfer two glucosyl residues to diacylglycerol (DAG), thereby catalyzing the formation of beta-monoglucosyl-DAG (3-O-(beta-D-glucopyranosyl)-1,2-diacyl-sn-glycerol) and beta-diglucosyl-DAG (3-O-(beta-D-glucopyranosyl-beta-(1-&gt;6)-D-glucopyranosyl)-1,2-diacyl-sn-glycerol). Beta-diglucosyl-DAG is the predominant glycolipid found in Bacillales and is also used as a membrane anchor for lipoteichoic acid (LTA). This chain is Processive diacylglycerol beta-glucosyltransferase, found in Staphylococcus aureus (strain bovine RF122 / ET3-1).